We begin with the raw amino-acid sequence, 491 residues long: Transmembrane protein 39B (491 aa).

Residues 1–56 (MAGGRRGANRTTYCRSPLSNDTGSVGNGNHSTSSPVTGVRSRTRNGSGTGMSSPPL) form a disordered region. N-linked (GlcNAc...) asparagine glycosylation is found at N9, N20, N29, and N45. Composition is skewed to polar residues over residues 9–36 (NRTT…SSPV) and 44–56 (RNGS…SPPL). 8 consecutive transmembrane segments (helical) span residues 79–99 (LFEL…YVNI), 115–135 (TSLN…IVLA), 152–172 (LSFP…TLAG), 185–205 (TYSV…IPFF), 290–310 (EVLV…VWFV), 322–342 (CELF…HLLP), 423–443 (ILNI…YSLM), and 449–469 (HQTI…FKLL).

This sequence belongs to the TMEM39 family. As to expression, expressed in the ovary, followed by the intestine and brain.

It localises to the endoplasmic reticulum membrane. Functionally, may protect the cells against DNA damage caused by exposure to the cold-warming stress and facilitates tissue damage repair during the recovery phase. This is Transmembrane protein 39B from Danio rerio (Zebrafish).